Here is a 298-residue protein sequence, read N- to C-terminus: ATP-dependent Clp protease proteolytic subunit 5, chloroplastic (298 aa).

The N-terminal 100 residues, 1-100, are a transit peptide targeting the chloroplast; it reads MAHACVSTSA…SSPYFPAYAQ (100 aa). Gly-101 bears the N-acetylglycine mark. The active-site Nucleophile is Ser-193. His-218 is an active-site residue.

This sequence belongs to the peptidase S14 family. In terms of assembly, component of the chloroplastic Clp protease core complex which consist of at least 16 proteins: CLPP4 (3 copies), CLPP5 (3 copies), CLPR4 (2 copies), ClpP1 (1 copy), CLPP6 (1 copy), CLPR2 (1 copy), CLPT1 (1 copy), CLPT2 (1 copy) and 3 copies of CLPP3 and/or CLPR1 and/or CLPR3. The core complex is organized in two heptameric rings, one containing CLPP3,4,5,6 in a 1:2:3:1 ratio and the other CLPP1 and CLPR1,2,3,4 in a 3:1:1:1:1 ratio. Interacts with CHIP. Ubiquitinated in vitro by CHIP. Mostly expressed in leaves. Also detected in stems, and to a lower extent, in roots (at protein level).

It localises to the plastid. The protein resides in the chloroplast stroma. The catalysed reaction is Hydrolysis of proteins to small peptides in the presence of ATP and magnesium. alpha-casein is the usual test substrate. In the absence of ATP, only oligopeptides shorter than five residues are hydrolyzed (such as succinyl-Leu-Tyr-|-NHMec, and Leu-Tyr-Leu-|-Tyr-Trp, in which cleavage of the -Tyr-|-Leu- and -Tyr-|-Trp bonds also occurs).. Cleaves peptides in various proteins in a process that requires ATP hydrolysis. Has a chymotrypsin-like activity. Plays a major role in the degradation of misfolded proteins. This chain is ATP-dependent Clp protease proteolytic subunit 5, chloroplastic, found in Arabidopsis thaliana (Mouse-ear cress).